The chain runs to 116 residues: Protein Rev (116 aa).

Residues serine 5 and serine 8 each carry the phosphoserine; by host CK2 modification. The interval 18-26 (IIKILYQSN) is homomultimerization. The Nuclear localization signal and RNA-binding (RRE) signature appears at 34 to 50 (TRQARRNRRRRWRARQR). Residues 73–84 (LQLPPLERLTLN) carry the Nuclear export signal and binding to XPO1 motif. The interval 87 to 116 (EDCGTSGEKGEGSPQISLESSTILGTGTKE) is disordered. Phosphoserine; by host is present on residues serine 92 and serine 99. A compositionally biased stretch (polar residues) spans 100–116 (PQISLESSTILGTGTKE).

Belongs to the HIV-1 REV protein family. As to quaternary structure, homomultimer; when bound to the RRE. Multimeric assembly is essential for activity and may involve XPO1. Binds to human KPNB1, XPO1, TNPO1, RANBP5 and IPO7. Interacts with the viral Integrase. Interacts with human KHDRBS1. Interacts with human NAP1; this interaction decreases Rev multimerization and stimulates its activity. Interacts with human DEAD-box helicases DDX3 and DDX24; these interactions may serve for viral RNA export to the cytoplasm and packaging, respectively. Interacts with human PSIP1; this interaction may inhibit HIV-1 DNA integration by promoting dissociation of the Integrase-LEDGF/p75 complex. Post-translationally, asymmetrically arginine dimethylated at one site by host PRMT6. Methylation impairs the RNA-binding activity and export of viral RNA from the nucleus to the cytoplasm. In terms of processing, phosphorylated by protein kinase CK2. Presence of, and maybe binding to the N-terminus of the regulatory beta subunit of CK2 is necessary for CK2-mediated Rev's phosphorylation.

It is found in the host nucleus. The protein resides in the host nucleolus. It localises to the host cytoplasm. Escorts unspliced or incompletely spliced viral pre-mRNAs (late transcripts) out of the nucleus of infected cells. These pre-mRNAs carry a recognition sequence called Rev responsive element (RRE) located in the env gene, that is not present in fully spliced viral mRNAs (early transcripts). This function is essential since most viral proteins are translated from unspliced or partially spliced pre-mRNAs which cannot exit the nucleus by the pathway used by fully processed cellular mRNAs. Rev itself is translated from a fully spliced mRNA that readily exits the nucleus. Rev's nuclear localization signal (NLS) binds directly to KPNB1/Importin beta-1 without previous binding to KPNA1/Importin alpha-1. KPNB1 binds to the GDP bound form of RAN (Ran-GDP) and targets Rev to the nucleus. In the nucleus, the conversion from Ran-GDP to Ran-GTP dissociates Rev from KPNB1 and allows Rev's binding to the RRE in viral pre-mRNAs. Rev multimerization on the RRE via cooperative assembly exposes its nuclear export signal (NES) to the surface. Rev can then form a complex with XPO1/CRM1 and Ran-GTP, leading to nuclear export of the complex. Conversion from Ran-GTP to Ran-GDP mediates dissociation of the Rev/RRE/XPO1/RAN complex, so that Rev can return to the nucleus for a subsequent round of export. Beside KPNB1, also seems to interact with TNPO1/Transportin-1, RANBP5/IPO5 and IPO7/RANBP7 for nuclear import. The nucleoporin-like HRB/RIP is an essential cofactor that probably indirectly interacts with Rev to release HIV RNAs from the perinuclear region to the cytoplasm. This chain is Protein Rev, found in Human immunodeficiency virus type 1 group M subtype H (isolate 90CF056) (HIV-1).